The primary structure comprises 625 residues: tRNA uridine 5-carboxymethylaminomethyl modification enzyme MnmG (625 aa).

FAD contacts are provided by residues 10-15, Val122, and Ser177; that span reads GGGHAG. 271 to 285 is an NAD(+) binding site; that stretch reads GPRYCPSIEDKVNRF. Gln368 contributes to the FAD binding site.

It belongs to the MnmG family. Homodimer. Heterotetramer of two MnmE and two MnmG subunits. It depends on FAD as a cofactor.

The protein localises to the cytoplasm. Functionally, NAD-binding protein involved in the addition of a carboxymethylaminomethyl (cmnm) group at the wobble position (U34) of certain tRNAs, forming tRNA-cmnm(5)s(2)U34. The protein is tRNA uridine 5-carboxymethylaminomethyl modification enzyme MnmG of Wolinella succinogenes (strain ATCC 29543 / DSM 1740 / CCUG 13145 / JCM 31913 / LMG 7466 / NCTC 11488 / FDC 602W) (Vibrio succinogenes).